The sequence spans 215 residues: Outer membrane protein assembly factor BamC homolog (215 aa).

An N-terminal signal peptide occupies residues methionine 1–glycine 16. Residue cysteine 17 is the site of N-palmitoyl cysteine attachment. Cysteine 17 is lipidated: S-diacylglycerol cysteine.

This sequence belongs to the BamC family.

Its subcellular location is the cell outer membrane. This chain is Outer membrane protein assembly factor BamC homolog, found in Haemophilus influenzae (strain ATCC 51907 / DSM 11121 / KW20 / Rd).